The primary structure comprises 231 residues: 26S proteasome non-ATPase regulatory subunit 10 (231 aa).

ANK repeat units lie at residues 3 to 36 (GCVSNIMICNLAYSGKLDELKERILADKSLATRT), 37 to 69 (DQDSRTALHWACSAGHTEIVEFLLQLGVPVNDK), 70 to 102 (DDAGWSPLHIAASAGRDEIVKALLVKGAHVNAV), 103 to 135 (NQNGCTPLHYAASKNRHEIAVMLLEGGANPDAK), 136 to 168 (DHYDATAMHRAAAKGNLKMVHILLFYKASTNIQ), 169 to 201 (DTEGNTPLHLACDEERVEEAKFLVTQGASIYIE), and 202 to 226 (NKEEKTPLQVAKGGLGLILKRLAES).

In terms of assembly, part of transient complex containing PSMD10, PSMC4, PSMC5 and PAAF1 formed during the assembly of the 26S proteasome. Stays associated throughout the assembly of the PA700/19S RC and is released upon association with the 20S core. Interacts with PSMC4. Interacts with RB1. Interacts with CDK4. Interacts with MDM2. Interacts with RELA. Associates with a CDK4:CCND2 serine/threonine kinase complex. Interacts with ARHGDIA and increases the interaction between ARHGDIA and RHOA, hence promotes ARHGDIA inactivation of RHOA and ROCK.

The protein localises to the cytoplasm. It is found in the nucleus. Its function is as follows. Acts as a chaperone during the assembly of the 26S proteasome, specifically of the PA700/19S regulatory complex (RC). In the initial step of the base subcomplex assembly is part of an intermediate PSMD10:PSMC4:PSMC5:PAAF1 module which probably assembles with a PSMD5:PSMC2:PSMC1:PSMD2 module. Independently of the proteasome, regulates EGF-induced AKT activation through inhibition of the RHOA/ROCK/PTEN pathway, leading to prolonged AKT activation. Plays an important role in RAS-induced tumorigenesis. In terms of biological role, acts as an oncoprotein by being involved in negative regulation of tumor suppressors RB1 and p53/TP53. Overexpression is leading to phosphorylation of RB1 and proteasomal degradation of RB1. Regulates CDK4-mediated phosphorylation of RB1 by competing with CDKN2A for binding with CDK4. Facilitates binding of MDM2 to p53/TP53 and the mono- and polyubiquitination of p53/TP53 by MDM2 suggesting a function in targeting the TP53:MDM2 complex to the 26S proteasome. Involved in p53-independent apoptosis. Involved in regulation of NF-kappa-B by retaining it in the cytoplasm. Binds to the NF-kappa-B component RELA and accelerates its XPO1/CRM1-mediated nuclear export. The protein is 26S proteasome non-ATPase regulatory subunit 10 (Psmd10) of Mus musculus (Mouse).